We begin with the raw amino-acid sequence, 305 residues long: Ribonuclease BN (305 aa).

Residues H64, H66, D68, H69, H141, D212, and H270 each contribute to the Zn(2+) site. The Proton acceptor role is filled by D68.

It belongs to the RNase Z family. RNase BN subfamily. Homodimer. Zn(2+) is required as a cofactor.

Its function is as follows. Zinc phosphodiesterase, which has both exoribonuclease and endoribonuclease activities. This Shigella flexneri protein is Ribonuclease BN.